The sequence spans 527 residues: GMP synthase [glutamine-hydrolyzing] (527 aa).

Positions 4 to 202 (KILILDFGSQ…VLQICGARAD (199 aa)) constitute a Glutamine amidotransferase type-1 domain. Cys81 (nucleophile) is an active-site residue. Catalysis depends on residues His176 and Glu178. Positions 203–395 (WEMGNYIDEA…LGLPPAMVYR (193 aa)) constitute a GMPS ATP-PPase domain. 230-236 (SGGVDSS) contributes to the ATP binding site.

In terms of assembly, homodimer.

The enzyme catalyses XMP + L-glutamine + ATP + H2O = GMP + L-glutamate + AMP + diphosphate + 2 H(+). The protein operates within purine metabolism; GMP biosynthesis; GMP from XMP (L-Gln route): step 1/1. Its function is as follows. Catalyzes the synthesis of GMP from XMP. This is GMP synthase [glutamine-hydrolyzing] from Paraburkholderia phytofirmans (strain DSM 17436 / LMG 22146 / PsJN) (Burkholderia phytofirmans).